Reading from the N-terminus, the 1314-residue chain is E3 ubiquitin-protein ligase RNF123 (1314 aa).

N-acetylalanine is present on Ala2. Residues 74–254 (VDSEDEESQG…VAFNFGSRPL (181 aa)) form the B30.2/SPRY domain. The disordered stretch occupies residues 460–481 (HRSSREGKDSAEDRAEAAEERP). The segment covering 462-481 (SSREGKDSAEDRAEAAEERP) has biased composition (basic and acidic residues). Ser675 carries the phosphoserine modification. Arg683 carries the asymmetric dimethylarginine modification. Residues 968-974 (WILVRLW) form an interaction with NFKB1 region. The Zn(2+) site is built by Cys1254, Cys1257, Cys1269, His1271, Cys1274, Cys1277, Cys1288, and Cys1291. Residues 1254–1292 (CPICYAHPISAVFQPCGHKSCKACIDQHLMNNKDCFFCK) form an RING-type zinc finger.

Component of the KPC complex composed of RNF123/KPC1 and UBAC1/KPC2. Interacts with UBAC1 and CDKN1B via its N-terminal domain. Interacts with RIGI (via N-terminus) and IFIH1 (via N-terminus). Post-translationally, ubiquitinated, leading to its degradation. Deubiquitinated by USP19, thereby stimulating CDKN1B ubiquitin-dependent degradation.

The protein localises to the cytoplasm. The enzyme catalyses S-ubiquitinyl-[E2 ubiquitin-conjugating enzyme]-L-cysteine + [acceptor protein]-L-lysine = [E2 ubiquitin-conjugating enzyme]-L-cysteine + N(6)-ubiquitinyl-[acceptor protein]-L-lysine.. It functions in the pathway protein modification; protein ubiquitination. In terms of biological role, catalytic subunit of the KPC complex that acts as E3 ubiquitin-protein ligase. Promotes the ubiquitination and proteasome-mediated degradation of CDKN1B which is the cyclin-dependent kinase inhibitor at the G0-G1 transition of the cell cycle. Also acts as a key regulator of the NF-kappa-B signaling by promoting maturation of the NFKB1 component of NF-kappa-B. Acts by catalyzing ubiquitination of the NFKB1 p105 precursor, leading to limited proteasomal degradation of NFKB1 p105 and generation of the active NFKB1 p50 subunit. Functions also as an inhibitor of innate antiviral signaling mediated by RIGI and IFIH1 independently of its E3 ligase activity. Interacts with the N-terminal CARD domains of RIGI and IFIH1 and competes with the downstream adapter MAVS. This is E3 ubiquitin-protein ligase RNF123 from Oryctolagus cuniculus (Rabbit).